The following is a 284-amino-acid chain: Bifunctional protein FolD (284 aa).

NADP(+) is bound by residues 166 to 168 (GAS) and I232.

The protein belongs to the tetrahydrofolate dehydrogenase/cyclohydrolase family. Homodimer.

The enzyme catalyses (6R)-5,10-methylene-5,6,7,8-tetrahydrofolate + NADP(+) = (6R)-5,10-methenyltetrahydrofolate + NADPH. The catalysed reaction is (6R)-5,10-methenyltetrahydrofolate + H2O = (6R)-10-formyltetrahydrofolate + H(+). Its pathway is one-carbon metabolism; tetrahydrofolate interconversion. Functionally, catalyzes the oxidation of 5,10-methylenetetrahydrofolate to 5,10-methenyltetrahydrofolate and then the hydrolysis of 5,10-methenyltetrahydrofolate to 10-formyltetrahydrofolate. This Shewanella sp. (strain MR-7) protein is Bifunctional protein FolD.